The chain runs to 502 residues: ATP synthase subunit beta (502 aa).

Residue 153 to 160 (GGAGVGKT) coordinates ATP.

It belongs to the ATPase alpha/beta chains family. As to quaternary structure, F-type ATPases have 2 components, CF(1) - the catalytic core - and CF(0) - the membrane proton channel. CF(1) has five subunits: alpha(3), beta(3), gamma(1), delta(1), epsilon(1). CF(0) has three main subunits: a(1), b(2) and c(9-12). The alpha and beta chains form an alternating ring which encloses part of the gamma chain. CF(1) is attached to CF(0) by a central stalk formed by the gamma and epsilon chains, while a peripheral stalk is formed by the delta and b chains.

Its subcellular location is the cell membrane. The catalysed reaction is ATP + H2O + 4 H(+)(in) = ADP + phosphate + 5 H(+)(out). Produces ATP from ADP in the presence of a proton gradient across the membrane. The catalytic sites are hosted primarily by the beta subunits. The chain is ATP synthase subunit beta from Amoebophilus asiaticus (strain 5a2).